We begin with the raw amino-acid sequence, 320 residues long: Nucleotide-binding protein Psyc_0118 (320 aa).

Residue 32 to 39 participates in ATP binding; that stretch reads GRSGSGKT. GTP is bound at residue 82-85; that stretch reads DIRT.

This sequence belongs to the RapZ-like family.

Its function is as follows. Displays ATPase and GTPase activities. The protein is Nucleotide-binding protein Psyc_0118 of Psychrobacter arcticus (strain DSM 17307 / VKM B-2377 / 273-4).